Here is a 200-residue protein sequence, read N- to C-terminus: Cell division protein SepF (200 aa).

Disordered regions lie at residues 35–60 (NLYQQENPQPPAPQESATAQNRRWRE) and 170–200 (LHEVPQPPARPSRPTGSPNQTWGNETNRMAQ). Residues 183-200 (PTGSPNQTWGNETNRMAQ) show a composition bias toward polar residues.

Belongs to the SepF family. As to quaternary structure, homodimer. Interacts with FtsZ.

Its subcellular location is the cytoplasm. In terms of biological role, cell division protein that is part of the divisome complex and is recruited early to the Z-ring. Probably stimulates Z-ring formation, perhaps through the cross-linking of FtsZ protofilaments. Its function overlaps with FtsA. The sequence is that of Cell division protein SepF from Nostoc punctiforme (strain ATCC 29133 / PCC 73102).